Here is a 542-residue protein sequence, read N- to C-terminus: Chaperonin GroEL 1 (542 aa).

ATP contacts are provided by residues 30-33, Lys-51, 87-91, Gly-415, 480-482, and Asp-496; these read TLGP, DGTTT, and NAA.

The protein belongs to the chaperonin (HSP60) family. In terms of assembly, forms a cylinder of 14 subunits composed of two heptameric rings stacked back-to-back. Interacts with the co-chaperonin GroES.

Its subcellular location is the cytoplasm. The enzyme catalyses ATP + H2O + a folded polypeptide = ADP + phosphate + an unfolded polypeptide.. Together with its co-chaperonin GroES, plays an essential role in assisting protein folding. The GroEL-GroES system forms a nano-cage that allows encapsulation of the non-native substrate proteins and provides a physical environment optimized to promote and accelerate protein folding. This chain is Chaperonin GroEL 1, found in Nitrobacter winogradskyi (strain ATCC 25391 / DSM 10237 / CIP 104748 / NCIMB 11846 / Nb-255).